A 114-amino-acid chain; its full sequence is T cell receptor beta variable 4-2 (114 aa).

The signal sequence occupies residues 1-21 (MGCRLLCCAVLCLLGAVPMET). Positions 22-114 (GVTQTPRHLV…SALYLCASSQ (93 aa)) constitute an Ig-like domain. C42 and C110 are oxidised to a cystine. 2 N-linked (GlcNAc...) asparagine glycosylation sites follow: N76 and N89.

As to quaternary structure, alpha-beta TR is a heterodimer composed of an alpha and beta chain; disulfide-linked. The alpha-beta TR is associated with the transmembrane signaling CD3 coreceptor proteins to form the TR-CD3 (TcR or TCR). The assembly of alpha-beta TR heterodimers with CD3 occurs in the endoplasmic reticulum where a single alpha-beta TR heterodimer associates with one CD3D-CD3E heterodimer, one CD3G-CD3E heterodimer and one CD247 homodimer forming a stable octameric structure. CD3D-CD3E and CD3G-CD3E heterodimers preferentially associate with TR alpha and TR beta chains, respectively. The association of the CD247 homodimer is the last step of TcR assembly in the endoplasmic reticulum and is required for transport to the cell surface.

It is found in the cell membrane. In terms of biological role, v region of the variable domain of T cell receptor (TR) beta chain that participates in the antigen recognition. Alpha-beta T cell receptors are antigen specific receptors which are essential to the immune response and are present on the cell surface of T lymphocytes. Recognize peptide-major histocompatibility (MH) (pMH) complexes that are displayed by antigen presenting cells (APC), a prerequisite for efficient T cell adaptive immunity against pathogens. Binding of alpha-beta TR to pMH complex initiates TR-CD3 clustering on the cell surface and intracellular activation of LCK that phosphorylates the ITAM motifs of CD3G, CD3D, CD3E and CD247 enabling the recruitment of ZAP70. In turn ZAP70 phosphorylates LAT, which recruits numerous signaling molecules to form the LAT signalosome. The LAT signalosome propagates signal branching to three major signaling pathways, the calcium, the mitogen-activated protein kinase (MAPK) kinase and the nuclear factor NF-kappa-B (NF-kB) pathways, leading to the mobilization of transcription factors that are critical for gene expression and essential for T cell growth and differentiation. The T cell repertoire is generated in the thymus, by V-(D)-J rearrangement. This repertoire is then shaped by intrathymic selection events to generate a peripheral T cell pool of self-MH restricted, non-autoaggressive T cells. Post-thymic interaction of alpha-beta TR with the pMH complexes shapes TR structural and functional avidity. The sequence is that of T cell receptor beta variable 4-2 from Homo sapiens (Human).